The chain runs to 466 residues: MSHSWDYDAIVIGSGPGGEGAAMGLVKQGARVAVIERYHNVGGGCTHWGTIPSKALRHAVSRIIEFNQNPLYSDHSRLLRSSFADILNHADSVINQQTHMRQGFYERNHCEILQGNAHFVDEHTLALECHDGTVETVTAEKFVIACGSRPYHPADVDFHHPRIYDSDSILSLQHEPRHVIIYGAGVIGCEYASIFRGMEVKVDLINTRDRLLAFLDQEMSDSLSYHFWNSGVVIRHNEEYEKIEGVDDGVIMHLKSGKKLKADCLLYANGRTGNTDTLALENIGLQTDSRGQLKVNSMYQTALPHIYAVGDVIGYPSLASAAYDQGRIAAQALVKGEASAHLIEDIPTGIYTIPEISSVGKTEQQLTAMKVPYEVGRAQFKHLARAQIVGMSVGTLKILFHRETKEILGIHCFGERAAEIIHIGQAIMEQKGGGNTIEYFVNTTFNYPTMAEAYRVAALNGLNRLF.

36 to 45 (ERYHNVGGGC) provides a ligand contact to FAD.

The protein belongs to the class-I pyridine nucleotide-disulfide oxidoreductase family. FAD is required as a cofactor.

It is found in the cytoplasm. It carries out the reaction NAD(+) + NADPH = NADH + NADP(+). In terms of biological role, conversion of NADPH, generated by peripheral catabolic pathways, to NADH, which can enter the respiratory chain for energy generation. The polypeptide is Soluble pyridine nucleotide transhydrogenase (Klebsiella pneumoniae subsp. pneumoniae (strain ATCC 700721 / MGH 78578)).